The primary structure comprises 1662 residues: Cortactin-binding protein 2 (1662 aa).

Disordered regions lie at residues 1–23 (MATD…AGAA), 203–222 (KKKT…RSTE), 361–440 (SHSD…LHPG), 454–479 (GNAN…PTSR), and 498–618 (RFTS…PSID). Positions 119–276 (KKMQERMSAQ…EQLKRGSDSK (158 aa)) form a coiled coil. Positions 386–396 (PSTDSTPDPTS) are enriched in low complexity. The segment covering 411–422 (QTPGIAPQNSQA) has biased composition (polar residues). R498 carries the asymmetric dimethylarginine modification. The span at 583–597 (TVASPPSSLPQGNRV) shows a compositional bias: polar residues. 6 ANK repeats span residues 709 to 739 (GRPT…DINY), 743 to 772 (DGHS…QINA), 776 to 805 (NGFT…NINH), 809 to 838 (GGQT…NRSV), 842 to 871 (DGWT…PACG), and 912 to 942 (EGWT…EPER). The disordered stretch occupies residues 1450-1474 (GESGAWRKVNTSPRRKSGRFSLPTW). S1524 carries the phosphoserine modification. Disordered stretches follow at residues 1580 to 1602 (SQKE…KSKT) and 1618 to 1662 (SKVT…KPNK). The span at 1582 to 1599 (KEVSPLSSHQTTECSNSK) shows a compositional bias: polar residues. Residues 1624-1638 (SQNTKRSSSSSNTRQ) show a composition bias toward low complexity. Residues 1639–1648 (IEINNNSKEN) show a composition bias toward polar residues. A compositionally biased stretch (basic and acidic residues) spans 1649-1662 (WNLHKNEHLDKPNK).

In terms of assembly, interacts with CTTN/cortactin SH3 domain. Interacts with STRN, STRN4/zinedin and MOB4/phocein; this interactions mediate the association with the STRIPAK core complex and may regulate dendritic spine distribution of the STRIPAK complex in hippocampal neurons. Activation of glutamate receptors weakens the interaction with STRN and STRN4.

The protein localises to the cytoplasm. It localises to the cell cortex. The protein resides in the cell projection. It is found in the dendritic spine. Regulates the dendritic spine distribution of CTTN/cortactin in hippocampal neurons, and thus controls dendritic spinogenesis and dendritic spine maintenance. Associates with the striatin-interacting phosphatase and kinase (STRIPAK) core complex to regulate dendritic spine distribution of the STRIPAK complex in hippocampal neurons. In Chlorocebus aethiops (Green monkey), this protein is Cortactin-binding protein 2 (CTTNBP2).